The following is a 103-amino-acid chain: Conantokin R1-A (103 aa).

Residues 1–21 (MQLYTYLYLLVPLVTFHLILG) form the signal peptide. The propeptide occupies 22–79 (TGTLDHGGALTERRSTDATALKPEPVLQKSAARSTDDNGKDRLTQMKRILKKRGNNPR). Residues 34–83 (RRSTDATALKPEPVLQKSAARSTDDNGKDRLTQMKRILKKRGNNPRADEE) are disordered. Positions 55-65 (STDDNGKDRLT) are enriched in basic and acidic residues. 3 positions are modified to 4-carboxyglutamate: Glu-82, Glu-83, and Glu-89.

This sequence belongs to the conotoxin B superfamily. The cofactor is Ca(2+). Mg(2+) is required as a cofactor. Expressed by the venom duct.

Its subcellular location is the secreted. Its function is as follows. Conantokins inhibit N-methyl-D-aspartate (NMDA) receptors. This toxin has the highest potency for the NR2B/GRIN2B subunit (IC(50)=0.11 uM), followed by NR2D/GRIN2D (IC(50)=0.48 uM), NR2A/GRIN2A (IC(50)=2.1 uM), and NR2C/GRIN2C (IC(50)=6.1 uM) subunits when tested on rat receptors. The chain is Conantokin R1-A from Conus rolani (Cone snail).